A 623-amino-acid chain; its full sequence is Phosphoenolpyruvate carboxykinase [GTP] (623 aa).

Substrate is bound by residues Arg86 and 220 to 222 (YGG). The Mn(2+) site is built by Lys229 and His248. Substrate is bound at residue Ser270. 271-276 (MCGKTS) contacts GTP. Residue Cys272 is part of the active site. Asp289 serves as a coordination point for Mn(2+). 384–386 (NAR) is a binding site for substrate. GTP-binding residues include Arg386 and Arg418.

The protein belongs to the phosphoenolpyruvate carboxykinase [GTP] family. In terms of assembly, homotetramer. Mn(2+) is required as a cofactor.

Its subcellular location is the cytoplasm. It carries out the reaction oxaloacetate + GTP = phosphoenolpyruvate + GDP + CO2. The protein operates within carbohydrate biosynthesis; gluconeogenesis. Its function is as follows. Involved in the gluconeogenesis. Catalyzes the conversion of oxaloacetate (OAA) to phosphoenolpyruvate (PEP), the rate-limiting step in the metabolic pathway that produces glucose from lactate and other precursors derived from the citric acid cycle. This is Phosphoenolpyruvate carboxykinase [GTP] (pckG) from Thermococcus kodakarensis (strain ATCC BAA-918 / JCM 12380 / KOD1) (Pyrococcus kodakaraensis (strain KOD1)).